Reading from the N-terminus, the 206-residue chain is 3-demethoxyubiquinol 3-hydroxylase (206 aa).

Fe cation contacts are provided by Glu-55, Glu-85, His-88, Glu-137, Glu-169, and His-172.

The protein belongs to the COQ7 family. Fe cation serves as cofactor.

It localises to the cell membrane. The enzyme catalyses a 5-methoxy-2-methyl-3-(all-trans-polyprenyl)benzene-1,4-diol + AH2 + O2 = a 3-demethylubiquinol + A + H2O. It participates in cofactor biosynthesis; ubiquinone biosynthesis. Functionally, catalyzes the hydroxylation of 2-nonaprenyl-3-methyl-6-methoxy-1,4-benzoquinol during ubiquinone biosynthesis. The protein is 3-demethoxyubiquinol 3-hydroxylase of Chromobacterium violaceum (strain ATCC 12472 / DSM 30191 / JCM 1249 / CCUG 213 / NBRC 12614 / NCIMB 9131 / NCTC 9757 / MK).